Here is a 481-residue protein sequence, read N- to C-terminus: Proline--tRNA ligase (481 aa).

It belongs to the class-II aminoacyl-tRNA synthetase family. ProS type 3 subfamily. As to quaternary structure, homodimer.

The protein resides in the cytoplasm. It catalyses the reaction tRNA(Pro) + L-proline + ATP = L-prolyl-tRNA(Pro) + AMP + diphosphate. In terms of biological role, catalyzes the attachment of proline to tRNA(Pro) in a two-step reaction: proline is first activated by ATP to form Pro-AMP and then transferred to the acceptor end of tRNA(Pro). This chain is Proline--tRNA ligase, found in Chlorobium phaeobacteroides (strain DSM 266 / SMG 266 / 2430).